The following is a 365-amino-acid chain: Cobalt-precorrin-5B C(1)-methyltransferase (365 aa).

It belongs to the CbiD family.

It catalyses the reaction Co-precorrin-5B + S-adenosyl-L-methionine = Co-precorrin-6A + S-adenosyl-L-homocysteine. The protein operates within cofactor biosynthesis; adenosylcobalamin biosynthesis; cob(II)yrinate a,c-diamide from sirohydrochlorin (anaerobic route): step 6/10. Catalyzes the methylation of C-1 in cobalt-precorrin-5B to form cobalt-precorrin-6A. In Methanococcus maripaludis (strain DSM 14266 / JCM 13030 / NBRC 101832 / S2 / LL), this protein is Cobalt-precorrin-5B C(1)-methyltransferase.